Consider the following 63-residue polypeptide: Race-specific elicitor A9 (63 aa).

The N-terminal stretch at 1–23 is a signal peptide; the sequence is MKLSLLSVELALLIATTLPLCWA. Positions 24–35 are excised as a propeptide; that stretch reads AALPVGLGVGLD. Cystine bridges form between cysteine 37/cysteine 51, cysteine 41/cysteine 54, and cysteine 47/cysteine 61.

Functionally, this necrosis-inducing peptide induces a hypersensitive response on Cf-9 tomato genotypes. Race-specific elicitors are compounds which only induce defense responses in genotypes of host plants which are resistant to the pathogenic race that produces the elicitor, but not in susceptible genotypes. This is Race-specific elicitor A9 (AVR9) from Passalora fulva (Tomato leaf mold).